The chain runs to 185 residues: Ribosome-recycling factor (185 aa).

This sequence belongs to the RRF family.

Its subcellular location is the cytoplasm. Responsible for the release of ribosomes from messenger RNA at the termination of protein biosynthesis. May increase the efficiency of translation by recycling ribosomes from one round of translation to another. This chain is Ribosome-recycling factor, found in Pseudomonas fluorescens (strain SBW25).